Reading from the N-terminus, the 540-residue chain is T-complex protein 1 subunit delta (540 aa).

Over residues 1 to 12 the composition is skewed to low complexity; that stretch reads MPPAVPAAAATA. The tract at residues 1–32 is disordered; the sequence is MPPAVPAAAATARQSASGRERNFKDKDKPESV. Positions 18 to 31 are enriched in basic and acidic residues; it reads GRERNFKDKDKPES.

The protein belongs to the TCP-1 chaperonin family. In terms of assembly, heterooligomeric complex of about 850 to 900 kDa that forms two stacked rings, 12 to 16 nm in diameter.

Its subcellular location is the cytoplasm. Its function is as follows. Molecular chaperone; assists the folding of proteins upon ATP hydrolysis. Known to play a role, in vitro, in the folding of actin and tubulin. The protein is T-complex protein 1 subunit delta (cct-4) of Caenorhabditis elegans.